The chain runs to 180 residues: ATP synthase subunit delta (180 aa).

This sequence belongs to the ATPase delta chain family. As to quaternary structure, F-type ATPases have 2 components, F(1) - the catalytic core - and F(0) - the membrane proton channel. F(1) has five subunits: alpha(3), beta(3), gamma(1), delta(1), epsilon(1). F(0) has three main subunits: a(1), b(2) and c(10-14). The alpha and beta chains form an alternating ring which encloses part of the gamma chain. F(1) is attached to F(0) by a central stalk formed by the gamma and epsilon chains, while a peripheral stalk is formed by the delta and b chains.

It localises to the cell membrane. Functionally, f(1)F(0) ATP synthase produces ATP from ADP in the presence of a proton or sodium gradient. F-type ATPases consist of two structural domains, F(1) containing the extramembraneous catalytic core and F(0) containing the membrane proton channel, linked together by a central stalk and a peripheral stalk. During catalysis, ATP synthesis in the catalytic domain of F(1) is coupled via a rotary mechanism of the central stalk subunits to proton translocation. Its function is as follows. This protein is part of the stalk that links CF(0) to CF(1). It either transmits conformational changes from CF(0) to CF(1) or is implicated in proton conduction. In Alkaliphilus metalliredigens (strain QYMF), this protein is ATP synthase subunit delta.